A 184-amino-acid chain; its full sequence is Adenine phosphoribosyltransferase (184 aa).

It belongs to the purine/pyrimidine phosphoribosyltransferase family. Homodimer.

Its subcellular location is the cytoplasm. It catalyses the reaction AMP + diphosphate = 5-phospho-alpha-D-ribose 1-diphosphate + adenine. The protein operates within purine metabolism; AMP biosynthesis via salvage pathway; AMP from adenine: step 1/1. Its function is as follows. Catalyzes a salvage reaction resulting in the formation of AMP, that is energically less costly than de novo synthesis. The protein is Adenine phosphoribosyltransferase of Corynebacterium diphtheriae (strain ATCC 700971 / NCTC 13129 / Biotype gravis).